A 754-amino-acid chain; its full sequence is MENRDDEVEHQHSTMGSEGGTAGDGTPPPKRKGKFSTLGKIFKPWKWRKKKSSEKFKETSEVLERKMSMRRPRQELIEQGVLKELPDNESGEAHGHKAPYVKNGHTLPVGVGGSLALEQVHSPSESEFRINPVWLPQPEDRRARAPSDGDHRGALGPRASNQDDGRRGGWSVGTEDWKNNLAWHGEDIRRGGRAHAEMDKRPGLMKAPSEDGRRTRPEPDWKPTLPRHSSVEEGRGRRESDSSQYLPNSEMMRDTLREPLPPKQSIMPPKWLMTSTPEPGSDSLPRTPVHNPAAPSFCSSNSSSSSSAGKPLRNVSSAGANTAPPGGAPLTTSSAPCSMGTIPNHPSKQPPMPPPKPINRSNNPAIMAELTQGGMNLVPAKPSPPMPPKRTTPVTKRNPEDSPLTIASLPSILSEDMRANIPGGYQLPPPPPSPPLPTHIPPSPPRAHTHHLLHQHSYPYPLPQPLPVHFDPPSPPEDPPARDEDDYSDEEEEEEDDEDDEEPPPDHLPSPQSQPELEPRSRRCLVGELSVSVIPEGNNSSEEEEDEEDQHPEESDSDGPVLYKDDESDEDEEDDSPPSALASRVKRKDTLALKLSSRPSAPDRQAPERQAKSEHSGLSWQSKEQWEAIRTQIGTALTRRLSQRPTAEELEQRNILQPKNEADRQAEVREIKRRLTRKLSQRPTVAELQARKILRFHEYVEVTSAQDYDRRADKPWTKLTPADKAAIRKELNEFKSSEMEVHEESRIYTRFHRP.

A compositionally biased stretch (basic and acidic residues) spans 1–12; that stretch reads MENRDDEVEHQH. Disordered stretches follow at residues 1–38, 83–105, 120–625, and 637–666; these read MENR…FSTL, KELP…KNGH, VHSP…SKEQ, and LTRR…DRQA. The RPEL 1 repeat unit spans residues 61-86; the sequence is EVLERKMSMRRPRQELIEQGVLKELP. Basic and acidic residues-rich tracts occupy residues 138 to 153, 184 to 221, and 229 to 241; these read PEDR…DHRG, HGED…EPDW, and SSVE…RESD. Low complexity-rich tracts occupy residues 296 to 307 and 316 to 333; these read SFCSSNSSSSSS and SSAG…LTTS. Composition is skewed to pro residues over residues 348–357, 381–390, 427–445, and 460–478; these read KQPPMPPPKP, KPSPPMPPKR, LPPP…PSPP, and YPLP…PPED. Acidic residues-rich tracts occupy residues 483–503, 541–557, and 566–576; these read DEDD…DEEP, SEEE…ESDS, and DESDEDEEDDS. Residues 605–615 are compositionally biased toward basic and acidic residues; the sequence is QAPERQAKSEH. 2 RPEL repeats span residues 635 to 660 and 673 to 698; these read TALT…QPKN and RRLT…RFHE. At Ser642 the chain carries Phosphoserine.

It belongs to the phosphatase and actin regulator family. Binds ppp1ca and actin.

The protein localises to the cytoplasm. Its subcellular location is the cell projection. The protein resides in the lamellipodium. Its function is as follows. Regulator of protein phosphatase 1 (PP1) required for neural tube and optic fissure closure, and enteric neural crest cell (ENCCs) migration during development. Acts as an activator of PP1. During neural tube closure, localizes to the ventral neural tube and activates PP1, leading to down-regulate cell proliferation within cranial neural tissue and the neural retina. Also acts as a regulator of migration of enteric neural crest cells (ENCCs) by activating PP1, leading to repression of the integrin signaling through the rho/rock pathway. This chain is Phosphatase and actin regulator 4B (phactr4b), found in Danio rerio (Zebrafish).